A 418-amino-acid chain; its full sequence is Actin-related protein 3B (418 aa).

Belongs to the actin family. ARP3 subfamily. As to quaternary structure, interacts with the Arp2/3 complex composed of ARP2, ARP3, ARPC1B, ARPC1B/p41-ARC, ARPC2/p34-ARC, ARPC3/p21-ARC, ARPC4/p20-ARC and ARPC5/p16-ARC. In terms of tissue distribution, detected in fetal brain. Detected throughout the adult brain, in neurons from gray matter, but not in white matter. Detected in liver, skeletal muscle and pancreas. Detected in lung adenocarcinoma cells with low metastatic potential, but not in lung adenocarcinoma cells with high metastatic potential.

Its subcellular location is the cytoplasm. The protein localises to the cytoskeleton. It localises to the cell projection. In terms of biological role, plays a role in the organization of the actin cytoskeleton. May function as ATP-binding component of the Arp2/3 complex which is involved in regulation of actin polymerization and together with an activating nucleation-promoting factor (NPF) mediates the formation of branched actin networks. May decrease the metastatic potential of tumors. The chain is Actin-related protein 3B (ACTR3B) from Homo sapiens (Human).